A 254-amino-acid chain; its full sequence is Probable phosphoglycerate mutase 4 (254 aa).

Residues 10–17 (RHGESTWN) and 23–24 (SC) each bind substrate. H11 functions as the Tele-phosphohistidine intermediate in the catalytic mechanism. S14 and S23 each carry phosphoserine. A Phosphotyrosine modification is found at Y26. S31 is modified (phosphoserine). Substrate contacts are provided by residues R62, 89–92 (ERHY), and K100. Catalysis depends on E89, which acts as the Proton donor/acceptor. The residue at position 106 (K106) is an N6-acetyllysine. Residue 116–117 (RR) coordinates substrate. Residue S118 is modified to Phosphoserine. 187–188 (GN) is a substrate binding site. An N6-acetyllysine; alternate modification is found at K251. K251 carries the post-translational modification N6-succinyllysine; alternate. An N6-acetyllysine mark is found at K253 and K254.

Belongs to the phosphoglycerate mutase family. BPG-dependent PGAM subfamily.

It catalyses the reaction (2R)-2-phosphoglycerate = (2R)-3-phosphoglycerate. The catalysed reaction is (2R)-3-phospho-glyceroyl phosphate = (2R)-2,3-bisphosphoglycerate + H(+). This is Probable phosphoglycerate mutase 4 (PGAM4) from Pan troglodytes (Chimpanzee).